Here is a 1294-residue protein sequence, read N- to C-terminus: CLIP-associating protein 2 (1294 aa).

The segment at 1–61 (MAMGDDKSFD…KVGGASKEGG (61 aa)) is disordered. Residues Ser8 and Ser14 each carry the phosphoserine modification. The span at 47–61 (SAGGPKVGGASKEGG) shows a compositional bias: gly residues. A TOG 1 region spans residues 60–311 (GGAGAVDEDD…KSLQTYLKSS (252 aa)). 3 HEAT repeats span residues 173-208 (HGAEAIVPTLFNLVPNSAKVMATSGCAAIRFIIRHT), 209-245 (HVPRLIPLITSNCTSKSVPVRRRSFEFLDLLLQEWQT), and 250-287 (RHAAVLVETIKKGIHDADAEARVEARKTYMGLRNHFPG). The disordered stretch occupies residues 314 to 368 (VASLPQSDRSSSSSQESLNRPFSSKWSTANPSTVAGRVSAGSSKASSLPGSLQRS). Phosphoserine occurs at positions 316, 327, and 330. Residues 316–334 (SLPQSDRSSSSSQESLNRP) are compositionally biased toward low complexity. 2 stretches are compositionally biased toward polar residues: residues 335–346 (FSSKWSTANPST) and 353–367 (AGSSKASSLPGSLQR). 4 positions are modified to phosphoserine: Ser360, Ser368, Ser370, and Ser407. A disordered region spans residues 409-467 (EDTSDKLDGTASEDGRVRAKLSAPLAGMGNAKADSRGRSRTKMVSQSQPGSRSGSPGRV). Residues 411–425 (TSDKLDGTASEDGRV) are compositionally biased toward basic and acidic residues. Residues 444-580 (RGRSRTKMVS…GPGYGISQSS (137 aa)) form an interaction with microtubules, MAPRE1 and MAPRE3 region. Residues 453–467 (SQSQPGSRSGSPGRV) are compositionally biased toward low complexity. Residues Ser455, Ser459, Ser463, Ser478, and Ser489 each carry the phosphoserine modification. A disordered region spans residues 488–557 (ASAQKRSKIP…PLASRHHSRS (70 aa)). Positions 494 to 497 (SKIP) match the SXIP motif 1; mediates interaction with MAPRE1 and targeting to microtubule plus ends motif. Position 507 is a phosphoserine (Ser507). An SXIP motif 2; mediates interaction with MAPRE1 and targeting to microtubule plus ends motif is present at residues 517 to 520 (SRIP). A phosphoserine mark is found at Ser525, Ser529, Ser585, Ser587, Ser596, Ser621, and Ser627. The segment at 617–645 (YGMHSDDDANSDASSACSERSYSSRNGSI) is disordered. The segment covering 627–641 (SDASSACSERSYSSR) has biased composition (low complexity). The tract at residues 649–881 (MRQTEDVAEV…TKLLHNHLRN (233 aa)) is TOG 2. HEAT repeat units follow at residues 710–747 (RVFSMFLETLVDFIQVHKDDLQDWLFVLLTQLLKKMGA) and 772–809 (LQFNILMRFTVDQTQTPSLKVKVAILKYIETLAKQMDP). Thr787 carries the post-translational modification Phosphothreonine. Residues 872 to 1294 (TKLLHNHLRN…DPTTDVSGQS (423 aa)) form an interaction with RSN and localization to the Golgi and kinetochores region. 2 disordered regions span residues 878–928 (HLRN…FDYD) and 952–995 (SFRS…DSSQ). Composition is skewed to polar residues over residues 880-892 (RNTGNGTQSSMGS) and 901-922 (SPANWSSPLTSPTNTSQNTLSP). Phosphoserine is present on Ser892. A phosphoserine mark is found at Ser952, Ser955, Ser1013, and Ser1029. Over residues 955–972 (SQEDMNEPLKRDSKKDDG) the composition is skewed to basic and acidic residues. Positions 1017–1294 (RDYNPYNYSD…DPTTDVSGQS (278 aa)) are required for cortical localization. 3 HEAT repeats span residues 1054–1091 (LDHSDLVAELLKELSNHNERVEERKIALYELMKLTQEE), 1098–1135 (EHFKTILLLLLETLGDKEPTIRALALKVLREILRHQPA), and 1216–1253 (LLLPEIMPGLIQGYDNSESSVRKACVFCLVAVHAVIGD).

It belongs to the CLASP family. In terms of assembly, interacts with microtubules. Interacts with MAPRE1; probably required for targeting to the growing microtubule plus ends. Interacts with CLIP2, ERC1, MAPRE3, PHLDB2 and RSN. The interaction with ERC1 may be mediated by PHLDB2. Interacts with GCC2; recruits CLASP2 to Golgi membranes. Interacts with MACF1. Interacts with mtcl2 and MTCL1. In terms of processing, phosphorylated by GSK3B. Phosphorylation reduces MAPRE1 binding. Phosphorylation by GSK3B may negatively regulate binding to microtubule lattices in lamella. In terms of tissue distribution, brain-specific.

It localises to the cytoplasm. It is found in the cytoskeleton. The protein resides in the microtubule organizing center. The protein localises to the centrosome. Its subcellular location is the chromosome. It localises to the centromere. It is found in the kinetochore. The protein resides in the spindle. The protein localises to the golgi apparatus. Its subcellular location is the trans-Golgi network. It localises to the cell membrane. It is found in the cell projection. The protein resides in the ruffle membrane. The protein localises to the cell cortex. In terms of biological role, microtubule plus-end tracking protein that promotes the stabilization of dynamic microtubules. Involved in the nucleation of noncentrosomal microtubules originating from the trans-Golgi network (TGN). Required for the polarization of the cytoplasmic microtubule arrays in migrating cells towards the leading edge of the cell. May act at the cell cortex to enhance the frequency of rescue of depolymerizing microtubules by attaching their plus-ends to cortical platforms composed of ERC1 and PHLDB2. This cortical microtubule stabilizing activity is regulated at least in part by phosphatidylinositol 3-kinase signaling. Also performs a similar stabilizing function at the kinetochore which is essential for the bipolar alignment of chromosomes on the mitotic spindle. Acts as a mediator of ERBB2-dependent stabilization of microtubules at the cell cortex. The sequence is that of CLIP-associating protein 2 (CLASP2) from Homo sapiens (Human).